Here is a 257-residue protein sequence, read N- to C-terminus: Gene 18 protein (257 aa).

Belongs to the herpesviridae UL79 family.

In Equus caballus (Horse), this protein is Gene 18 protein (18).